The primary structure comprises 926 residues: Up-regulator of cell proliferation (926 aa).

A Phosphoserine modification is found at Ser3. Residues 689-924 form the VLIG-type G domain; sequence RSRLVVLSAL…NIQQLIELLR (236 aa).

The protein belongs to the TRAFAC class dynamin-like GTPase superfamily. Very large inducible GTPase (VLIG) family.

The protein resides in the cytoplasm. Its subcellular location is the nucleus. Its function is as follows. May be involved in cell cycle progression through the regulation of cyclin D1 expression. In Mus musculus (Mouse), this protein is Up-regulator of cell proliferation (Urgcp).